The primary structure comprises 75 residues: Protein SlyX homolog (75 aa).

Belongs to the SlyX family.

This Vibrio atlanticus (strain LGP32) (Vibrio splendidus (strain Mel32)) protein is Protein SlyX homolog.